A 150-amino-acid chain; its full sequence is Transthyretin (150 aa).

Residues 1-20 form the signal peptide; it reads MAFHSTLLVFLAGLVFLSEA. Cys-33 carries the post-translational modification Sulfocysteine. L-thyroxine-binding residues include Lys-38, Glu-77, and Ser-140.

The protein belongs to the transthyretin family. Homotetramer. Dimer of dimers. In the homotetramer, subunits assemble around a central channel that can accommodate two ligand molecules. Post-translationally, sulfonation of the reactive cysteine Cys-33 enhances the stability of the native conformation of TTR, avoiding misassembly of the protein leading to amyloid formation. Detected in serum (at protein level). Detected in liver and choroid plexus.

It is found in the secreted. Functionally, thyroid hormone-binding protein. Probably transports thyroxine from the bloodstream to the brain. This chain is Transthyretin (TTR), found in Gallus gallus (Chicken).